Reading from the N-terminus, the 761-residue chain is Membrane protein of ER body-like protein (761 aa).

2 disordered regions span residues 1–85 and 120–162; these read MGSA…GEHT and GSES…RSRE. Acidic residues predominate over residues 22–31; sequence EVEEDDEQIV. The segment covering 48 to 65 has biased composition (low complexity); it reads VDSSTITNTSSSSSSSFS. Residues 74-85 show a composition bias toward basic and acidic residues; that stretch reads PDFHSNGDGEHT. Residues 136–154 show a composition bias toward polar residues; sequence TADLNGEQTQLEPENGSTS. Residues 186–206 adopt a coiled-coil conformation; the sequence is IEEEVDFEDVEYHDVENMMDK. Disordered stretches follow at residues 338–374 and 416–448; these read SSSV…TGSA and QTQQ…PSHG. The segment covering 416–432 has biased composition (polar residues); sequence QTQQKIDNDDSSTADGN. A run of 5 helical transmembrane segments spans residues 549–569, 573–593, 640–660, 670–690, and 702–722; these read IVYG…SAAG, SMLN…ILII, VAIL…YFSF, VASV…AKAH, and ILYY…VGNF.

This sequence belongs to the CCC1 family.

It is found in the endoplasmic reticulum membrane. Functionally, not essential for the accumulation of ER body components, including PYK10. This is Membrane protein of ER body-like protein (MEBL) from Arabidopsis thaliana (Mouse-ear cress).